Consider the following 502-residue polypeptide: ATP synthase subunit alpha (502 aa).

The tract at residues 115 to 136 (VDGLGPIHTTKTRPIESPAPGV) is disordered. 169-176 (GDRQTGKT) contacts ATP.

The protein belongs to the ATPase alpha/beta chains family. In terms of assembly, F-type ATPases have 2 components, CF(1) - the catalytic core - and CF(0) - the membrane proton channel. CF(1) has five subunits: alpha(3), beta(3), gamma(1), delta(1), epsilon(1). CF(0) has three main subunits: a(1), b(2) and c(9-12). The alpha and beta chains form an alternating ring which encloses part of the gamma chain. CF(1) is attached to CF(0) by a central stalk formed by the gamma and epsilon chains, while a peripheral stalk is formed by the delta and b chains.

Its subcellular location is the cell membrane. It carries out the reaction ATP + H2O + 4 H(+)(in) = ADP + phosphate + 5 H(+)(out). Its function is as follows. Produces ATP from ADP in the presence of a proton gradient across the membrane. The alpha chain is a regulatory subunit. In Bacillus cytotoxicus (strain DSM 22905 / CIP 110041 / 391-98 / NVH 391-98), this protein is ATP synthase subunit alpha.